Reading from the N-terminus, the 185-residue chain is Flavodoxin (185 aa).

Residues 4–159 (VLVIYDTRTG…ACRRLGRRLA (156 aa)) form the Flavodoxin-like domain.

This sequence belongs to the flavodoxin family. FMN is required as a cofactor.

Its function is as follows. Low-potential electron donor to a number of redox enzymes. The sequence is that of Flavodoxin (fldA) from Aquifex aeolicus (strain VF5).